A 396-amino-acid polypeptide reads, in one-letter code: Tryptophan synthase beta chain (396 aa).

Lysine 86 carries the N6-(pyridoxal phosphate)lysine modification.

Belongs to the TrpB family. In terms of assembly, tetramer of two alpha and two beta chains. Pyridoxal 5'-phosphate serves as cofactor.

It carries out the reaction (1S,2R)-1-C-(indol-3-yl)glycerol 3-phosphate + L-serine = D-glyceraldehyde 3-phosphate + L-tryptophan + H2O. It functions in the pathway amino-acid biosynthesis; L-tryptophan biosynthesis; L-tryptophan from chorismate: step 5/5. In terms of biological role, the beta subunit is responsible for the synthesis of L-tryptophan from indole and L-serine. This is Tryptophan synthase beta chain from Vibrio cholerae serotype O1 (strain ATCC 39315 / El Tor Inaba N16961).